A 563-amino-acid polypeptide reads, in one-letter code: MGLSPSIYKDVGDLSSLSTDVIIIGGGATGAGIARDCALRGIDCILLERRDIATGATGRNHGLLHSGARYAVNDQESAEECIKENRILRKIARHCVDETEGLFITLPEDSLDYQKTFLESCAKSGIDAQAIDPELAKIMEPSVNPDLVGAVVVPDGSIDPFRLTASNMMDATENGAKMFTYCEVKNLIREGGKVIGVNAYDHKNRRERQFFAPLVVNAGGIWGQGIAEYADLKIKMFPAKGALLVMGHRINKLVINRCRKPADADILVPGDTICVIGTTSSRIPYDQIDNMEVTPEEVDILFREGEKLAPSLRHTRVLRAYAGVRPLVASDDDPSGRNVSRGIVLLDHAERDGLDGFITITGGKLMTYRLMAEWATDLVCKKLNKTARCVTAEQPLPGSTESRQETNQKVISLPSTIRYSAVYRHGSRATRLLEKERLDRSMVCECEAVTAGEVRYAVDELDVNNLVDLRRRSRVGMGTCQAELCACRAAGLMNRFEVATPRQSTTQLSAFMEERWRGIEPIAWGEAIREAEFTSWMYASVLGLNDVKPLDEQAQQGTDSNEF.

Residue 20–48 (DVIIIGGGATGAGIARDCALRGIDCILLE) participates in FAD binding.

The protein belongs to the FAD-dependent glycerol-3-phosphate dehydrogenase family. As to quaternary structure, composed of a catalytic GlpA/B dimer and of membrane bound GlpC. FAD serves as cofactor. The cofactor is FMN.

The protein localises to the cell inner membrane. It carries out the reaction a quinone + sn-glycerol 3-phosphate = dihydroxyacetone phosphate + a quinol. Its pathway is polyol metabolism; glycerol degradation via glycerol kinase pathway; glycerone phosphate from sn-glycerol 3-phosphate (anaerobic route): step 1/1. The polypeptide is Anaerobic glycerol-3-phosphate dehydrogenase subunit A (glpA) (Haemophilus influenzae (strain ATCC 51907 / DSM 11121 / KW20 / Rd)).